The sequence spans 488 residues: Glutamyl-tRNA(Gln) amidotransferase subunit A (488 aa).

Active-site charge relay system residues include Lys78 and Ser153. Catalysis depends on Ser177, which acts as the Acyl-ester intermediate.

Belongs to the amidase family. GatA subfamily. In terms of assembly, heterotrimer of A, B and C subunits.

The catalysed reaction is L-glutamyl-tRNA(Gln) + L-glutamine + ATP + H2O = L-glutaminyl-tRNA(Gln) + L-glutamate + ADP + phosphate + H(+). In terms of biological role, allows the formation of correctly charged Gln-tRNA(Gln) through the transamidation of misacylated Glu-tRNA(Gln) in organisms which lack glutaminyl-tRNA synthetase. The reaction takes place in the presence of glutamine and ATP through an activated gamma-phospho-Glu-tRNA(Gln). The polypeptide is Glutamyl-tRNA(Gln) amidotransferase subunit A (Thermoanaerobacter pseudethanolicus (strain ATCC 33223 / 39E) (Clostridium thermohydrosulfuricum)).